A 229-amino-acid polypeptide reads, in one-letter code: Uracil-DNA glycosylase (229 aa).

The Proton acceptor role is filled by D64.

The protein belongs to the uracil-DNA glycosylase (UDG) superfamily. UNG family.

Its subcellular location is the cytoplasm. It catalyses the reaction Hydrolyzes single-stranded DNA or mismatched double-stranded DNA and polynucleotides, releasing free uracil.. In terms of biological role, excises uracil residues from the DNA which can arise as a result of misincorporation of dUMP residues by DNA polymerase or due to deamination of cytosine. This chain is Uracil-DNA glycosylase, found in Klebsiella pneumoniae (strain 342).